A 226-amino-acid chain; its full sequence is Phosphoribosylformylglycinamidine synthase subunit PurQ (226 aa).

One can recognise a Glutamine amidotransferase type-1 domain in the interval 3–226; the sequence is RVAVIRFPGT…FESLVEWCRS (224 aa). Cys-86 serves as the catalytic Nucleophile. Active-site residues include His-199 and Glu-201.

In terms of assembly, part of the FGAM synthase complex composed of 1 PurL, 1 PurQ and 2 PurS subunits.

It localises to the cytoplasm. The enzyme catalyses N(2)-formyl-N(1)-(5-phospho-beta-D-ribosyl)glycinamide + L-glutamine + ATP + H2O = 2-formamido-N(1)-(5-O-phospho-beta-D-ribosyl)acetamidine + L-glutamate + ADP + phosphate + H(+). The catalysed reaction is L-glutamine + H2O = L-glutamate + NH4(+). It functions in the pathway purine metabolism; IMP biosynthesis via de novo pathway; 5-amino-1-(5-phospho-D-ribosyl)imidazole from N(2)-formyl-N(1)-(5-phospho-D-ribosyl)glycinamide: step 1/2. Functionally, part of the phosphoribosylformylglycinamidine synthase complex involved in the purines biosynthetic pathway. Catalyzes the ATP-dependent conversion of formylglycinamide ribonucleotide (FGAR) and glutamine to yield formylglycinamidine ribonucleotide (FGAM) and glutamate. The FGAM synthase complex is composed of three subunits. PurQ produces an ammonia molecule by converting glutamine to glutamate. PurL transfers the ammonia molecule to FGAR to form FGAM in an ATP-dependent manner. PurS interacts with PurQ and PurL and is thought to assist in the transfer of the ammonia molecule from PurQ to PurL. This is Phosphoribosylformylglycinamidine synthase subunit PurQ from Methanopyrus kandleri (strain AV19 / DSM 6324 / JCM 9639 / NBRC 100938).